A 622-amino-acid polypeptide reads, in one-letter code: Low affinity potassium transport system protein Kup (622 aa).

12 consecutive transmembrane segments (helical) span residues 9-29, 49-69, 103-123, 137-157, 165-185, 213-233, 247-267, 276-296, 337-357, 363-383, 396-416, and 419-439; these read LSAI…TSPL, VFGF…IKYL, VIMG…TPAI, PELD…LFMI, VGKL…GLGL, VSFI…ALYA, WFSV…ALLL, PFFL…AALA, IYIP…IVSF, LAAA…ILST, FVAL…SANL, and LLSG…IMTT.

It belongs to the HAK/KUP transporter (TC 2.A.72) family.

Its subcellular location is the cell inner membrane. It catalyses the reaction K(+)(in) + H(+)(in) = K(+)(out) + H(+)(out). Its function is as follows. Responsible for the low-affinity transport of potassium into the cell. Likely operates as a K(+):H(+) symporter. The sequence is that of Low affinity potassium transport system protein Kup from Citrobacter koseri (strain ATCC BAA-895 / CDC 4225-83 / SGSC4696).